Here is a 1866-residue protein sequence, read N- to C-terminus: MQWKKKFTRLKAATGNSRVRRMLCCGRRKENGRSVPDVTASPGRAPPGPLPANQMPAMGNQQHHGNQQHHGNQQQHHGNQHSNHRGQSGSLSNAAGVKDPVMLQGDFRKVSGISSEIFRQIEAVENDHDPNTAAALEAVERRGEMIVRVLEPRCMGSKQAVDAAHKLMNKADARHTVQLVEIVKRPGQTLGLYIREGNGADRTDGVFISRIALESAVYNSGCLRVGDEILAVNLVDVTHMSLDDVVIIMSIPRRLVLAIRQRRGNRGTGSPGPPTLSRPEQKPPPVVVIKRDLRDEDLDETDRMPRPRSSRDRRTGDGREMTESRSRLGLGLNNYSPQSEQLDMYYNTRGGGGGAMGEPPNWGYKPPPPPSSVITEQPTKAHAFAPSHAYYQNAGTLESLAEKVHAFYPGQPGGPPVGPSRRMSTGTGNVGLAQQHARFPRSGSDQHLPRVEYSDYSNSLGRHSLLRSSLKPGTTGGAPMQVGVGGTLGRYGRYDQQRAGVSKYGPPSGGAQSLTRRSRPNLDYSSDTEATIGPRPSYYYYNRPAIGSMSRGSGGAGGGVGAASTAALLAGAADLNKFNSLPRERPGTRLQGIRSRMGDRLVDENDGNTSAPEFDVRRGRDLRQRITASPSIFTADEYRAWLRRAPSSSAIAEQMRMTRDMFAQPRAQRFSCSAENIHDALRNTESIYSSRNHILGTGTLDRNMGLTRPISALPVRSMSSQHIGGAGSIRSPSIRRMRQLLELSAGPASPSGSILSTGGHQSPAPTPSATLPRPHRQIDINPAEFAKYKLDKPIVDIGGISGMLWIHLLAGRGLRTAPEGAAGTATQGQTRDLYCVIECDRVHKARTVVRSGDLQFDWDESFELDLVGNKQLDVLVYSWDPQHRHKLCYRGAISLSSILRQSPLHQLALKVEPRGTIYIRMRHTDPLALYKRRGLPSLRAGYPTLFGADLETVVNRESKNAPGSAPVPIVLRRCVEEVERRGLDIIGLYRLCGSATKKRLLREAFERNSRAVELTPEHVPDINVITGVLKDYLRELPEPLFTRCLFQMTVDALAVCLPDDPEGNAKLMLSILDCLPRANRATLVFLLDHLSLVVSNSERNKMSAQALATVMGPPLMLHSASAQPGADIDHAQPIAVLKYLLQIWPQPQAQHQQMAQHMGGAAGAMMGGLVTAGSMSNMAGVASGRRGESTGQRGSKVSALPADRQQLLLQQQAQLMAAGNLLRSSTSVTNILSQGHPQLSATANNHLYQSVVGQLAQSHRALQQAVQQPYQLGGSVGSAIPDPSPLPLPGTPSPGSSSASTGSGSGSGKSTDTIKRGASPVSVKQVKIVDQPSSPYSIVMKKPPLQKDAPVEITTPTTQADTESTLGCKESNGTASRRGNVDFYDTHKTQAKSVVNEESSYSSKYTGSETKKIIPGNSSYTPSKANASGLSGGEDYKAMRNKSSATSSSSSSQATVLSAGSTATSAPTTSSDDSDDLVSYKSSASTNALLAQSQAMTTSQLMSKYLKREPRVQFTPIKSPESPSPPGSGDGLPKGTYQLVTPISGSSSKPGATTGAISKYTTGSVESSINANSQKLSSPSRLCNSKDSNSRTGTASSTTPATSMVSTGRRLFDSLASSSSSETETKTYIGGTTAASGAITTTIYTNDTKNSGSSSSKSGIGGGSGTGLGAVSGASSETRSFGSTLFGSSGLGNGNGSSHNHSSASPSPFTTTNGNGNHNTMHLYGTLPKNGTSTGAALFGGSANSSSYHSSASGSGAGTASSSGVSSMTGSTNSYDFYTSTSSTVSSSRPFANGGNNYHTLGTYRAQYAATNPFLDAFDEKPGSNGGNAHGEEKLGADKGHHRAAVMAFQSSGDSKNGSDEYDDIK.

Disordered regions lie at residues 22 to 98 (MLCC…AGVK), 262 to 336 (RRGN…NNYS), and 466 to 530 (LRSS…DTEA). Low complexity predominate over residues 59–77 (GNQQHHGNQQHHGNQQQHH). The PDZ domain occupies 179–264 (LVEIVKRPGQ…LVLAIRQRRG (86 aa)). Residues 271–286 (PGPPTLSRPEQKPPPV) are compositionally biased toward pro residues. The span at 301 to 326 (TDRMPRPRSSRDRRTGDGREMTESRS) shows a compositional bias: basic and acidic residues. Ser719 carries the phosphoserine modification. Positions 745-775 (AGPASPSGSILSTGGHQSPAPTPSATLPRPH) are disordered. Residues 750–760 (PSGSILSTGGH) show a composition bias toward polar residues. The region spanning 789–908 (KLDKPIVDIG…LRQSPLHQLA (120 aa)) is the C2 domain. The region spanning 948 to 1148 (ADLETVVNRE…YLLQIWPQPQ (201 aa)) is the Rho-GAP domain. Disordered regions lie at residues 1273–1328 (GGSV…QVKI), 1356–1380 (PTTQ…RRGN), 1393–1479 (SVVN…DLVS), 1514–1607 (FTPI…MVST), 1644–1727 (YTND…YGTL), and 1819–1840 (DEKP…ADKG). The span at 1282 to 1292 (DPSPLPLPGTP) shows a compositional bias: pro residues. A compositionally biased stretch (low complexity) spans 1293 to 1302 (SPGSSSASTG). Composition is skewed to polar residues over residues 1356 to 1377 (PTTQ…TASR), 1393 to 1408 (SVVN…YTGS), and 1416 to 1429 (GNSS…NASG). The segment covering 1443 to 1479 (SSATSSSSSSQATVLSAGSTATSAPTTSSDDSDDLVS) has biased composition (low complexity). Over residues 1538 to 1587 (QLVTPISGSSSKPGATTGAISKYTTGSVESSINANSQKLSSPSRLCNSKD) the composition is skewed to polar residues. Low complexity-rich tracts occupy residues 1590–1607 (SRTG…MVST) and 1644–1658 (YTND…SSKS). Positions 1659 to 1670 (GIGGGSGTGLGA) are enriched in gly residues. 2 stretches are compositionally biased toward low complexity: residues 1671 to 1688 (VSGA…LFGS) and 1696 to 1720 (GSSH…NHNT). A compositionally biased stretch (basic and acidic residues) spans 1830–1839 (HGEEKLGADK).

As to quaternary structure, interacts (via PDZ domain) with Nrx-1; may recruit Nrx-1 to the presynaptic active zone.

It localises to the presynapse. Functionally, GTPase activator for the Rho-type GTPases by converting them to an inactive GDP-bound state. Promotes the anchoring of Liprin-alpha clusters at synapses. Recruits and keeps Nrx-1 levels high in active zones in the presynapse opposite the postsynaptic region. The sequence is that of Rho GTPase-activating protein 100F (RhoGAP100F) from Drosophila melanogaster (Fruit fly).